We begin with the raw amino-acid sequence, 103 residues long: Large ribosomal subunit protein eL43 (103 aa).

It belongs to the eukaryotic ribosomal protein eL43 family.

This is Large ribosomal subunit protein eL43 (RPL37A) from Tetrahymena thermophila (strain SB210).